Here is a 175-residue protein sequence, read N- to C-terminus: MSRVAKKPISIPKGVEVSVQSDMLTVKGVKGVLTFPKSDNVNVVMDGDILTLSANDPSHISLAGTVRAILSNMIKGVSIGFERKLELVGVGYRASMQGKDLNLTLGFSHPLVFVPPEGITLLTPSQTEVVVQGIDKQRVGEVAAKIRSFRPPEPYKGKGLKYAAEAIIRKEAKKA.

The protein belongs to the universal ribosomal protein uL6 family. As to quaternary structure, part of the 50S ribosomal subunit.

In terms of biological role, this protein binds to the 23S rRNA, and is important in its secondary structure. It is located near the subunit interface in the base of the L7/L12 stalk, and near the tRNA binding site of the peptidyltransferase center. The chain is Large ribosomal subunit protein uL6 from Xylella fastidiosa (strain M12).